The following is a 351-amino-acid chain: MITLAVDAMGGDQGLAVTVPGATAFLQAHPDVRLIMTGDETQLRQALTAAGAPMERIDICHTTQVVGMDEAPQSALKNKKDSSMRVAINQVKEGKAQAAVSAGNTGALMATARFVLKTIPGIERPAIAKFLPSDTDHVTLALDLGANVDCTSEQLAQFAVIGSELVHALHPQKGQPRVGLVNVGTEDIKGTDTVKQTYKLLQNSKLNFIGNIESNGILYGEADVVVADGFVGNVMLKTIEGAVKFMSGAIRREFQSNLFNKLAAVAALPALKGLKNKLDPRKFNGAILLGLRGIVIKSHGGTDETGFRYALEEAYHEAKSAGLSKIEQGVAEQLAALETAKAVQNENVGGL.

The protein belongs to the PlsX family. Homodimer. Probably interacts with PlsY.

The protein localises to the cytoplasm. The catalysed reaction is a fatty acyl-[ACP] + phosphate = an acyl phosphate + holo-[ACP]. It functions in the pathway lipid metabolism; phospholipid metabolism. Functionally, catalyzes the reversible formation of acyl-phosphate (acyl-PO(4)) from acyl-[acyl-carrier-protein] (acyl-ACP). This enzyme utilizes acyl-ACP as fatty acyl donor, but not acyl-CoA. The chain is Phosphate acyltransferase from Neisseria meningitidis serogroup B (strain ATCC BAA-335 / MC58).